The chain runs to 216 residues: Ion-translocating oxidoreductase complex subunit G (216 aa).

A helical membrane pass occupies residues 14–34 (ALVLGSFGFLAASFVSIIYVI). An FMN phosphoryl threonine modification is found at threonine 181.

The protein belongs to the RnfG family. In terms of assembly, the complex is composed of six subunits: RnfA, RnfB, RnfC, RnfD, RnfE and RnfG. Requires FMN as cofactor.

The protein resides in the cell inner membrane. In terms of biological role, part of a membrane-bound complex that couples electron transfer with translocation of ions across the membrane. The protein is Ion-translocating oxidoreductase complex subunit G of Buchnera aphidicola subsp. Baizongia pistaciae (strain Bp).